Reading from the N-terminus, the 576-residue chain is Sulfite reductase [NADPH] hemoprotein beta-component (576 aa).

Cys439, Cys445, Cys485, and Cys489 together coordinate [4Fe-4S] cluster. Cys489 serves as a coordination point for siroheme.

It belongs to the nitrite and sulfite reductase 4Fe-4S domain family. As to quaternary structure, alpha(8)-beta(8). The alpha component is a flavoprotein, the beta component is a hemoprotein. Siroheme serves as cofactor. Requires [4Fe-4S] cluster as cofactor.

The enzyme catalyses hydrogen sulfide + 3 NADP(+) + 3 H2O = sulfite + 3 NADPH + 4 H(+). It functions in the pathway sulfur metabolism; hydrogen sulfide biosynthesis; hydrogen sulfide from sulfite (NADPH route): step 1/1. Its function is as follows. Component of the sulfite reductase complex that catalyzes the 6-electron reduction of sulfite to sulfide. This is one of several activities required for the biosynthesis of L-cysteine from sulfate. The polypeptide is Sulfite reductase [NADPH] hemoprotein beta-component (Aliivibrio fischeri (strain ATCC 700601 / ES114) (Vibrio fischeri)).